A 141-amino-acid chain; its full sequence is Oleosin L (141 aa).

Helical transmembrane passes span V23 to A43, V46 to V66, and A74 to V94. Residues P54–P65 carry the Proline-knot motif.

This sequence belongs to the oleosin family. As to expression, expressed in megagametophytes (at protein level).

Its subcellular location is the lipid droplet. It is found in the membrane. This Pinus massoniana (Chinese red pine) protein is Oleosin L.